The primary structure comprises 68 residues: Palustrin-1c (68 aa).

The first 22 residues, 1 to 22 (MFTMKKSLLLLFFLGTISLSLC), serve as a signal peptide directing secretion. Residues 23-39 (EEERGADEEEGDGEKLT) constitute a propeptide that is removed on maturation. C62 and C68 form a disulfide bridge.

Expressed by the skin glands.

It is found in the secreted. Antimicrobial peptide. In Odorrana versabilis (Chinese bamboo leaf odorous frog), this protein is Palustrin-1c.